Consider the following 210-residue polypeptide: dTTP/UTP pyrophosphatase (210 aa).

A compositionally biased stretch (basic and acidic residues) spans 1–15 (MTHGDNRDGPGRETR). The segment at 1–22 (MTHGDNRDGPGRETRSSGPLVL) is disordered. Asp86 acts as the Proton acceptor in catalysis.

This sequence belongs to the Maf family. YhdE subfamily. Requires a divalent metal cation as cofactor.

It is found in the cytoplasm. It carries out the reaction dTTP + H2O = dTMP + diphosphate + H(+). The enzyme catalyses UTP + H2O = UMP + diphosphate + H(+). In terms of biological role, nucleoside triphosphate pyrophosphatase that hydrolyzes dTTP and UTP. May have a dual role in cell division arrest and in preventing the incorporation of modified nucleotides into cellular nucleic acids. The chain is dTTP/UTP pyrophosphatase from Rhodospirillum rubrum (strain ATCC 11170 / ATH 1.1.1 / DSM 467 / LMG 4362 / NCIMB 8255 / S1).